The following is a 153-amino-acid chain: Endoribonuclease YbeY (153 aa).

Positions 119, 123, and 129 each coordinate Zn(2+).

Belongs to the endoribonuclease YbeY family. The cofactor is Zn(2+).

Its subcellular location is the cytoplasm. Its function is as follows. Single strand-specific metallo-endoribonuclease involved in late-stage 70S ribosome quality control and in maturation of the 3' terminus of the 16S rRNA. The protein is Endoribonuclease YbeY of Desulforamulus reducens (strain ATCC BAA-1160 / DSM 100696 / MI-1) (Desulfotomaculum reducens).